Here is a 52-residue protein sequence, read N- to C-terminus: VEQNWATLQGGEMTIQTTQASEATQAVASLAEAAVAASQEMQQGATVTMALN.

It belongs to the NRF1/Ewg family. Homodimer. Binds DNA as a dimer. Interacts with PPRC1. Post-translationally, phosphorylation enhances DNA binding. As to expression, expressed at high levels in the lung and testis, at intermediate levels in the kidney, heart and brain and at low levels in the muscle and liver.

The protein localises to the nucleus. Its function is as follows. Transcription factor that activates the expression of the EIF2S1 (EIF2-alpha) gene. Links the transcriptional modulation of key metabolic genes to cellular growth and development. Implicated in the control of nuclear genes required for respiration, heme biosynthesis, and mitochondrial DNA transcription and replication. The polypeptide is Nuclear respiratory factor 1 (Nrf1) (Rattus norvegicus (Rat)).